A 68-amino-acid polypeptide reads, in one-letter code: Small proline-rich protein 2K (68 aa).

The stretch at 21 to 26 (PKPCSP) is one 1; truncated repeat. Positions 21–65 (PKPCSPPKCPEPCPPPKCPETCPPQPCQRKCPPVLEAPCQQKCPS) are 3.5 X 9 AA approximate tandem repeats. 3 consecutive repeat copies span residues 27-35 (PKCPEPCPP), 36-44 (PKCPETCPP), and 45-53 (QPCQRKCPP).

It belongs to the cornifin (SPRR) family. Not expressed in uterus.

Its subcellular location is the cytoplasm. Its function is as follows. Cross-linked envelope protein of keratinocytes. It is a keratinocyte protein that first appears in the cell cytosol, but ultimately becomes cross-linked to membrane proteins by transglutaminase. All that results in the formation of an insoluble envelope beneath the plasma membrane. The protein is Small proline-rich protein 2K (Sprr2k) of Mus musculus (Mouse).